The following is a 498-amino-acid chain: ATP synthase subunit beta, chloroplastic (498 aa).

Position 172–179 (172–179) interacts with ATP; sequence GGAGVGKT.

This sequence belongs to the ATPase alpha/beta chains family. F-type ATPases have 2 components, CF(1) - the catalytic core - and CF(0) - the membrane proton channel. CF(1) has five subunits: alpha(3), beta(3), gamma(1), delta(1), epsilon(1). CF(0) has four main subunits: a(1), b(1), b'(1) and c(9-12).

The protein localises to the plastid. It localises to the chloroplast thylakoid membrane. It carries out the reaction ATP + H2O + 4 H(+)(in) = ADP + phosphate + 5 H(+)(out). Produces ATP from ADP in the presence of a proton gradient across the membrane. The catalytic sites are hosted primarily by the beta subunits. The polypeptide is ATP synthase subunit beta, chloroplastic (Morus indica (Mulberry)).